We begin with the raw amino-acid sequence, 425 residues long: Phosphoribosylamine--glycine ligase (425 aa).

Positions 107–312 (KDLCARYNIP…LLVLLNAAVD (206 aa)) constitute an ATP-grasp domain. ATP is bound at residue 133-193 (VDQTGAPIVI…EEFMTGEEAS (61 aa)). The tract at residues 214-233 (RVGDGDVGPNTGGMGAYSPA) is disordered. Positions 282 and 284 each coordinate Mg(2+).

It belongs to the GARS family. Mg(2+) serves as cofactor. It depends on Mn(2+) as a cofactor.

The catalysed reaction is 5-phospho-beta-D-ribosylamine + glycine + ATP = N(1)-(5-phospho-beta-D-ribosyl)glycinamide + ADP + phosphate + H(+). It participates in purine metabolism; IMP biosynthesis via de novo pathway; N(1)-(5-phospho-D-ribosyl)glycinamide from 5-phospho-alpha-D-ribose 1-diphosphate: step 2/2. This Mesorhizobium japonicum (strain LMG 29417 / CECT 9101 / MAFF 303099) (Mesorhizobium loti (strain MAFF 303099)) protein is Phosphoribosylamine--glycine ligase.